The sequence spans 408 residues: Peptidase T (408 aa).

A Zn(2+)-binding site is contributed by His-78. Asp-80 is an active-site residue. Asp-140 contributes to the Zn(2+) binding site. Glu-173 functions as the Proton acceptor in the catalytic mechanism. Positions 174, 196, and 379 each coordinate Zn(2+).

Belongs to the peptidase M20B family. It depends on Zn(2+) as a cofactor.

Its subcellular location is the cytoplasm. The enzyme catalyses Release of the N-terminal residue from a tripeptide.. Functionally, cleaves the N-terminal amino acid of tripeptides. The protein is Peptidase T of Escherichia coli O9:H4 (strain HS).